A 647-amino-acid chain; its full sequence is MLVVFTMKKAHSPLFPIFTFVLINLIILSLSRLGLAVWQSERVSAVDGWLQLFLQGVRMDVVALCYLFGVPALLTTLFHSSKVWVKILRLWLTFGSVFIIFMEIATPAFIETYDYRPNRLFIEYLIYPKEVFSMLAEGHLSAVIFSLVFTILAAVIYWKISGWAVKNLRSMSWKLRPVIALLVIVVSFLGARSSFQHRGINPAMVAFSSDALVNSLVLNSGYSVIYAAQQFKDEEKSSEMYGKMDADEMFRIVKASRGRPESDYISDKYPTLTKNVATYQGKPKNIVILLQESLGAQFIGTLGGKPLSPNVDQLAKEGWLFENLYATGTRSVRGIEATTAGFTPTPARAVVKLNNAQSGFFTIADLLHKQGYNTSFIYGGEKHFDNMASFFYGNGFKDIWDQQDYQNPKFTGTWGVSDEDLFDKANETFTKLQNEGKPFFSLVFSSSNHDPFEYPDGKIELYEQPKATRNNAAKYADYALGHFFKMAKQSNYWKDTIFLIIADHDSRVGGASLVPIKHFHIPALILGDGITPRRDSRLVSQIDMPTTLLSLAGVSGNYPMIGFDLTQDVNPDRAFMQYDQTQAMMKGNNDVVIQMPNKAAQGYHYDKSTETLTPKDVPDAMKKEALAHALLGSYLYKNRLYSSGENK.

Transmembrane regions (helical) follow at residues 14-38, 61-78, 90-110, 140-158, and 178-195; these read LFPI…LAVW, VVAL…TTLF, LWLT…PAFI, LSAV…VIYW, and VIAL…RSSF.

The protein localises to the cell membrane. This is an uncharacterized protein from Haemophilus influenzae (strain ATCC 51907 / DSM 11121 / KW20 / Rd).